The chain runs to 1099 residues: MYITPLFFPNLLKLQRKSFLTFLKYGIKKEIKKLDITKNKKKLLVYPNLFQLNLPTYTCNECVITSKTYNCELVIPIRLISYKDEIEWITLTNIPIMTNKCNFITNGSPRVIMSQITRAPGIYYHKENENTYYADIIAERGNWLRIEIDKKNNIWMKVKKVPKVPALMFLQALGVTKSNLIKLLKYPIPNQNHNLGNFKSQKEALEKIELYSQLESSINSRNLKNQNKITIFDRFMNPKYYDLGTRGRIQINKKFNNIEETIQHSTLTSKDFILAVHFLLKIKYKIEETDDIDNLKNKRVKIAGELIQSQFGIGILRLQKYVKDKLGNIKNNLHLTNIFSSTPINTTLAEFFGVNPLSQFMDEVNPLATLTHKRRLSSLGIGGVNRDTATLTIRSIHPTLYGRICPIETPEGKNAGLVNSFALFAEINSEGLIETPFFRVCNGRILYEMGINYLSANQEDKSNIVPFDIKKSRIGFLSKNKIAARIKQQFKEVSKKKVDFISISQLQMLSVATSLIPFMEHNDANRVLMGSNMQRQAVPLLKTECCLVGTGLETKIFFDLQDNVKSPPNGFISYLSLKKITISNIRNEHKSFNFKSNPLETITCIKSKSRNFNRLKYNLKDLLTNSKESLKITNYMSYVREQKIQYYIKQYNSSNQGTCSVNRLTLNEGQFIIKKNPLISGLSSCRNELALGKNLFVGYISWKGYNFEDAIVLNEQLVINNIYTSTHLEKFETEIKKNKENSEIITRDIKNISFLNKKNLDKNGIIKIGSRVFSDDILVGKLLPIETRILSPYRKLLYEILQKQNDHYRNTSLRVPKYKRGRITFVDYIKDKGKIKKKTEILKDLKTIKIHLMQNRLIQIGDKISGRHGNKGVISKILKIQEMPYLNDGIPLDILLNPLGVPSRMNIGQVLECLLGLSCFYLQRRFKVIPFDESFGFEVSRNFIYSNLYFSNIKTGNNWLLHPYYPGKNRIFDSYSGLPFDQPITIGKAYILKLIHLVEEKVHARSTGSYSLVTQQPLKGKSKKGGQRVGEMEVWALEGYGAAYTLHEILTVKSDDIKSRQKVLTSILNSETIKFGTTETFKVLIRELQSLCLNIQFFK.

It belongs to the RNA polymerase beta chain family. In terms of assembly, in plastids the minimal PEP RNA polymerase catalytic core is composed of four subunits: alpha, beta, beta', and beta''. When a (nuclear-encoded) sigma factor is associated with the core the holoenzyme is formed, which can initiate transcription.

It is found in the plastid. Its subcellular location is the chloroplast. The enzyme catalyses RNA(n) + a ribonucleoside 5'-triphosphate = RNA(n+1) + diphosphate. Functionally, DNA-dependent RNA polymerase catalyzes the transcription of DNA into RNA using the four ribonucleoside triphosphates as substrates. This chain is DNA-directed RNA polymerase subunit beta, found in Bigelowiella natans (Pedinomonas minutissima).